We begin with the raw amino-acid sequence, 156 residues long: V-type sodium ATPase subunit K (156 aa).

Transmembrane regions (helical) follow at residues 11–31 (GMVFAVLAMATATIFSGIGSA), 60–80 (LLPGTQGLYGFVIAFLIFINL), 89–109 (GLNFLGASLPIAFTGLFSGIA), and 132–152 (IIFAAMVETYAILGFVISFLL).

Belongs to the V-ATPase proteolipid subunit family. The N-terminus is blocked.

The protein localises to the cell membrane. Functionally, involved in ATP-driven sodium extrusion. The protein is V-type sodium ATPase subunit K (ntpK) of Enterococcus hirae (strain ATCC 9790 / DSM 20160 / JCM 8729 / LMG 6399 / NBRC 3181 / NCIMB 6459 / NCDO 1258 / NCTC 12367 / WDCM 00089 / R).